Consider the following 123-residue polypeptide: Fluoride-specific ion channel FluC (123 aa).

The next 4 membrane-spanning stretches (helical) occupy residues 5–25 (VWVA…YKFV), 33–53 (LATF…IGAF), 62–82 (LKLA…TFAA), and 94–114 (ITAF…VALG). G72 and S75 together coordinate Na(+).

It belongs to the fluoride channel Fluc/FEX (TC 1.A.43) family.

The protein localises to the cell inner membrane. It catalyses the reaction fluoride(in) = fluoride(out). With respect to regulation, na(+) is not transported, but it plays an essential structural role and its presence is essential for fluoride channel function. Its function is as follows. Fluoride-specific ion channel. Important for reducing fluoride concentration in the cell, thus reducing its toxicity. This Ignicoccus hospitalis (strain KIN4/I / DSM 18386 / JCM 14125) protein is Fluoride-specific ion channel FluC.